The chain runs to 285 residues: D-apionate oxidoisomerase (285 aa).

NAD(+) contacts are provided by residues 15 to 17, Glu-36, and Asp-71; that span reads GKM. 2 residues coordinate Zn(2+): His-116 and Glu-186.

This sequence belongs to the ApnO family. Requires Zn(2+) as cofactor.

It carries out the reaction D-apionate + NAD(+) = 3-oxoisoapionate + NADH + H(+). It functions in the pathway carbohydrate metabolism. Functionally, involved in catabolism of D-apiose. Catalyzes the conversion of D-apionate to 3-oxo-isoapionate. In Pectobacterium atrosepticum (strain SCRI 1043 / ATCC BAA-672) (Erwinia carotovora subsp. atroseptica), this protein is D-apionate oxidoisomerase.